The primary structure comprises 469 residues: Adenosylhomocysteinase (469 aa).

Threonine 63, aspartate 139, and glutamate 164 together coordinate substrate. Threonine 165 to threonine 167 lines the NAD(+) pocket. Substrate is bound by residues lysine 194 and aspartate 198. NAD(+) is bound by residues asparagine 199, glycine 228–glycine 233, glutamate 251, asparagine 300, isoleucine 321–histidine 323, and asparagine 375.

This sequence belongs to the adenosylhomocysteinase family. NAD(+) is required as a cofactor.

The protein resides in the cytoplasm. The catalysed reaction is S-adenosyl-L-homocysteine + H2O = L-homocysteine + adenosine. Its pathway is amino-acid biosynthesis; L-homocysteine biosynthesis; L-homocysteine from S-adenosyl-L-homocysteine: step 1/1. Functionally, may play a key role in the regulation of the intracellular concentration of adenosylhomocysteine. The polypeptide is Adenosylhomocysteinase (Pseudomonas putida (strain ATCC 700007 / DSM 6899 / JCM 31910 / BCRC 17059 / LMG 24140 / F1)).